A 682-amino-acid polypeptide reads, in one-letter code: DNA-directed RNA polymerase subunit beta' (682 aa).

Zn(2+) contacts are provided by Cys69, Cys71, Cys87, and Cys90. Positions 489, 491, and 493 each coordinate Mg(2+).

It belongs to the RNA polymerase beta' chain family. RpoC1 subfamily. As to quaternary structure, in plastids the minimal PEP RNA polymerase catalytic core is composed of four subunits: alpha, beta, beta', and beta''. When a (nuclear-encoded) sigma factor is associated with the core the holoenzyme is formed, which can initiate transcription. The cofactor is Mg(2+). Requires Zn(2+) as cofactor.

The protein localises to the plastid. The protein resides in the chloroplast. It carries out the reaction RNA(n) + a ribonucleoside 5'-triphosphate = RNA(n+1) + diphosphate. DNA-dependent RNA polymerase catalyzes the transcription of DNA into RNA using the four ribonucleoside triphosphates as substrates. The chain is DNA-directed RNA polymerase subunit beta' from Platanus occidentalis (Sycamore).